Consider the following 454-residue polypeptide: MSTRNSQSIRSSCDRCRSHKLKCTVSPEDSRSGPHKCTRCIRAQVTCVFGPRSQSKRTPNGKNKPEKPKPELEPPQKTSPPVCSSSLAGMDLGSPGAWTPWIDDLASQETEEPLPIDVNTAGDGSGPSDGDFWADLGMTQELNMLELAPTNTYQAQYLASFDYVAPPVAEVGHLMDISEPSEHTPPHAIVQLSTLVTKIHETSKALEESPWSNVPDAKQLQNYPIGRVLSLSQDFCSILGCIWGKVSISSDGQSSGSGSSPTPSADMLDYAEVLSSIKITQDPTASSSMAASVDMPTALLVLSCYTSLIKLYSLVFAHFENHLSHLPEIPSPYPSQAALASHRWGLQLGELPSADETCTKICTAVQVLLDAFQSVEDVFGLPRSFSAVRQRTCDMEGMDFSAELGRTSLWTDYMVHFVVRSNAIRADTEECEEMRELSTKVRSLKALIREKMNL.

The zn(2)-C6 fungal-type DNA-binding region spans 13–47; that stretch reads CDRCRSHKLKCTVSPEDSRSGPHKCTRCIRAQVTC. The tract at residues 51–89 is disordered; it reads PRSQSKRTPNGKNKPEKPKPELEPPQKTSPPVCSSSLAG. Residues 52-61 show a composition bias toward polar residues; it reads RSQSKRTPNG. Over residues 63-74 the composition is skewed to basic and acidic residues; it reads NKPEKPKPELEP.

The protein resides in the nucleus. Transcription factor that regulates the expression of the gene cluster that mediates the biosynthesis of trichosetin, a trans-fused decalin-containing tetramic acid with antimicrobial activity. Directly activates expression of only the three biosynthetic genes PKS-NRPS1, DA and ER, while TF23 and MFS-T are induced by the final product trichosetin and not by TF22. The sequence is that of Trichosetin biosynthesis cluster transcription factor TF22 from Gibberella fujikuroi (strain CBS 195.34 / IMI 58289 / NRRL A-6831) (Bakanae and foot rot disease fungus).